Here is a 737-residue protein sequence, read N- to C-terminus: Catalase-peroxidase 2 (737 aa).

Residues M1–G33 form a disordered region. Residues W107–Y235 constitute a cross-link (tryptophyl-tyrosyl-methioninium (Trp-Tyr) (with M-261)). H108 serves as the catalytic Proton acceptor. A cross-link (tryptophyl-tyrosyl-methioninium (Tyr-Met) (with W-107)) is located at residues Y235–M261. H276 is a heme binding site.

Belongs to the peroxidase family. Peroxidase/catalase subfamily. Homodimer or homotetramer. Heme b is required as a cofactor. Formation of the three residue Trp-Tyr-Met cross-link is important for the catalase, but not the peroxidase activity of the enzyme.

The catalysed reaction is H2O2 + AH2 = A + 2 H2O. The enzyme catalyses 2 H2O2 = O2 + 2 H2O. Bifunctional enzyme with both catalase and broad-spectrum peroxidase activity. The sequence is that of Catalase-peroxidase 2 from Mycolicibacterium vanbaalenii (strain DSM 7251 / JCM 13017 / BCRC 16820 / KCTC 9966 / NRRL B-24157 / PYR-1) (Mycobacterium vanbaalenii).